We begin with the raw amino-acid sequence, 513 residues long: Exoglucanase 1 (513 aa).

Residues 1–17 form the signal peptide; sequence MYRKLAVISAFLATARA. Q18 carries the post-translational modification Pyrrolidone carboxylic acid. A catalytic region spans residues 18–453; sequence QSACTLQSET…GSTGNPSGGN (436 aa). Disulfide bonds link C21–C89, C36–C42, C67–C88, C78–C84, C155–C414, C189–C227, C193–C226, C247–C273, C255–C260, and C278–C348. An N-linked (GlcNAc) asparagine glycan is attached at N62. E229 functions as the Nucleophile in the catalytic mechanism. E234 acts as the Proton donor/acceptor in catalysis. N-linked (GlcNAc) asparagine glycosylation is found at N287 and N401. Positions 401-437 are enriched in polar residues; the sequence is NETSSTPGAVRGSCSTSSGVPAQVESQSPNAKVTFSN. The tract at residues 401–480 is disordered; it reads NETSSTPGAV…TGSSPGPTQS (80 aa). The span at 449-459 shows a compositional bias: gly residues; that stretch reads PSGGNPPGGNR. A linker region spans residues 454 to 477; that stretch reads PPGGNRGTTTTRRPATTTGSSPGP. Residues 460 to 478 show a composition bias toward low complexity; the sequence is GTTTTRRPATTTGSSPGPT. O-linked (Man) threonine glycosylation is present at T461. T462, T463, and T464 each carry an O-linked (Man...) threonine glycan. T469 carries O-linked (Man) threonine glycosylation. O-linked (Man...) threonine glycosylation is found at T470 and T471. 2 O-linked (Man) serine glycosylation sites follow: S473 and S474. In terms of domain architecture, CBM1 spans 477–513; sequence PTQSHYGQCGGIGYSGPTVCASGTTCQVLNPYYSQCL. The O-linked (Man) threonine glycan is linked to T478. O-linked (Man) serine glycans are attached at residues S480 and S491. Cystine bridges form between C485-C502 and C496-C512.

It belongs to the glycosyl hydrolase 7 (cellulase C) family. N-glycosylated. The catalytic core domain comprises three N-linked glycans which each consist of a single N-acetylglucosamine residue. Post-translationally, O-glycosylated. Within the linker domain, all 8 threonines are variably glycosylated with between at least one, and up to three, mannose residues per site. All serines in this domain are at least partially glycosylated with a single mannose residue. O-glycosylation of the cellulase linker provides protection from proteolysis. Linker glycans also contribute to binding affinity of cellobiohydrolases to cellulose.

It is found in the secreted. The catalysed reaction is Hydrolysis of (1-&gt;4)-beta-D-glucosidic linkages in cellulose and cellotetraose, releasing cellobiose from the non-reducing ends of the chains.. Its function is as follows. Exocellobiohydrolases (CBH) that catalyzes the hydrolysis of 1,4-beta-D-glucosidic bonds in cellulose to release the disaccharide cellobiose. The degradation of cellulose involves an interplay between different cellulolytic enzymes. Hydrolysis starts with endoglucanases (EGs), which cut internal beta-1,4-glucosidic bonds in cellulose to reduce the polymerization degree of the substrate and create new chain ends for exocellobiohydrolases (CBHs). The CBHs release the disaccharide cellobiose from the non-reducing end of the cellulose polymer chain. Finally, beta-1,4-glucosidases hydrolyze the cellobiose and other short cello-oligosaccharides into glucose units. The chain is Exoglucanase 1 (cbh1) from Hypocrea jecorina (Trichoderma reesei).